Consider the following 559-residue polypeptide: Urocanate hydratase (559 aa).

NAD(+) is bound by residues 54-55 (GG), Q132, 178-180 (GMG), E198, R203, 244-245 (NA), 265-269 (QTSAH), 275-276 (YL), and Y324. Residue C412 is part of the active site. G494 lines the NAD(+) pocket.

Belongs to the urocanase family. NAD(+) is required as a cofactor.

It localises to the cytoplasm. The catalysed reaction is 4-imidazolone-5-propanoate = trans-urocanate + H2O. The protein operates within amino-acid degradation; L-histidine degradation into L-glutamate; N-formimidoyl-L-glutamate from L-histidine: step 2/3. Its function is as follows. Catalyzes the conversion of urocanate to 4-imidazolone-5-propionate. This Photorhabdus laumondii subsp. laumondii (strain DSM 15139 / CIP 105565 / TT01) (Photorhabdus luminescens subsp. laumondii) protein is Urocanate hydratase.